The following is a 514-amino-acid chain: MVLDLDLFRVDKGGDPALIRESQEKRFKDPGLVDQLVKADSEWRRCRFRADNLNKLKNLCSKTIGEKMKKKEPVGNDESIPEDVLNLDDLTADTLTNLKVSQIKKVRLLVDEAILKCDAERIKLEAERFESLREIGNLLHPSVPISDDEDADNKVERIWGDCTVRKKYSHVDLVVMVDGFEGEKGAVVAGSRGYFLKGVLVFLEQALIQFALRTLASRGYTPIYTPFFMRKEVMQEVAQLSQFDEELYKVIGKGSEKSDDNSYEEKYLIATSEQPIAALHRDEWLRPEDLPIKYAGLSTCFRQEVGSHGRDTRGIFRVHQFEKIEQFVYSSPHDNKSWEMFEEMIATAEEFYQSLGIPYHIVNIVSGSLNHAASKKLDLEAWFPGSGAFRELVSCSNCTDYQARRLRIRYGQTKKMMDKVEFVHMLNATMCATTRTICAILENYQTEKGILVPEKLKEFMPPGLQELIPFVKAAPIDQEPSKKQKKQHEGSKKKGAARDVALESQLQNMEVTDA.

The residue at position 1 (Met-1) is an N-acetylmethionine. Residues 9–61 are interaction with tRNA; the sequence is RVDKGGDPALIRESQEKRFKDPGLVDQLVKADSEWRRCRFRADNLNKLKNLCS. Phosphoserine is present on Ser-241. L-serine is bound by residues Thr-271 and Arg-302. Residues 302 to 304 and 318 to 321 each bind ATP; these read RQE and VHQF. The residue at position 323 (Lys-323) is an N6-acetyllysine. Residue Glu-325 coordinates L-serine. 391–394 is a binding site for ATP; sequence ELVS. Asn-427 contacts L-serine. Residues 475–514 form a disordered region; that stretch reads PIDQEPSKKQKKQHEGSKKKGAARDVALESQLQNMEVTDA. Positions 479–501 are enriched in basic and acidic residues; it reads EPSKKQKKQHEGSKKKGAARDVA. Residues 482–494 carry the Nuclear localization signal motif; sequence KKQKKQHEGSKKK. Polar residues predominate over residues 504–514; it reads SQLQNMEVTDA.

It belongs to the class-II aminoacyl-tRNA synthetase family. Type-1 seryl-tRNA synthetase subfamily. As to quaternary structure, homodimer. The tRNA molecule may bind across the dimer. Interacts with SIRT2. Interacts with METTL6; interaction is required for the tRNA N(3)-methylcytidine methyltransferase activity of METTL6.

Its subcellular location is the cytoplasm. It localises to the nucleus. It catalyses the reaction tRNA(Ser) + L-serine + ATP = L-seryl-tRNA(Ser) + AMP + diphosphate + H(+). The catalysed reaction is tRNA(Sec) + L-serine + ATP = L-seryl-tRNA(Sec) + AMP + diphosphate + H(+). The protein operates within aminoacyl-tRNA biosynthesis; selenocysteinyl-tRNA(Sec) biosynthesis; L-seryl-tRNA(Sec) from L-serine and tRNA(Sec): step 1/1. Its function is as follows. Catalyzes the attachment of serine to tRNA(Ser) in a two-step reaction: serine is first activated by ATP to form Ser-AMP and then transferred to the acceptor end of tRNA(Ser). Is probably also able to aminoacylate tRNA(Sec) with serine, to form the misacylated tRNA L-seryl-tRNA(Sec), which will be further converted into selenocysteinyl-tRNA(Sec). In the nucleus, binds to the VEGFA core promoter and prevents MYC binding and transcriptional activation by MYC. Recruits SIRT2 to the VEGFA promoter, promoting deacetylation of histone H4 at 'Lys-16' (H4K16). Thereby, inhibits the production of VEGFA and sprouting angiogenesis mediated by VEGFA. In Bos taurus (Bovine), this protein is Serine--tRNA ligase, cytoplasmic (SARS1).